A 584-amino-acid polypeptide reads, in one-letter code: tRNA-guanine(15) transglycosylase (584 aa).

D95 serves as the catalytic Nucleophile. The substrate site is built by D130 and G196. The Zn(2+) site is built by C279, C281, and C284. Residues R507 to S582 form the PUA domain.

This sequence belongs to the archaeosine tRNA-ribosyltransferase family. The cofactor is Zn(2+).

The enzyme catalyses guanosine(15) in tRNA + 7-cyano-7-deazaguanine = 7-cyano-7-carbaguanosine(15) in tRNA + guanine. The protein operates within tRNA modification; archaeosine-tRNA biosynthesis. Functionally, exchanges the guanine residue with 7-cyano-7-deazaguanine (preQ0) at position 15 in the dihydrouridine loop (D-loop) of archaeal tRNAs. The polypeptide is tRNA-guanine(15) transglycosylase (Pyrococcus abyssi (strain GE5 / Orsay)).